We begin with the raw amino-acid sequence, 790 residues long: F-box and leucine-rich repeat protein 13 (790 aa).

An F-box domain is found at 237–283; it reads AFDISVLPEQAILQIFLYLTFKDMMACSRVNRSWMAMIQRGSLWNSI. 6 LRR repeats span residues 503–525, 531–552, 557–579, 582–602, 606–628, and 632–657; these read QLTV…HFFD, RLRE…IRLS, NLHY…YIAS, SLIS…TILS, KLRE…AYCK, and LLEH…IFCT.

Belongs to the DRC6 family. In terms of assembly, component of the nexin-dynein regulatory complex (N-DRC). Directly interacts with SKP1 and CUL1. Interacts with TCTE1/DRC5.

It localises to the cytoplasm. It is found in the cytoskeleton. The protein resides in the flagellum axoneme. The protein localises to the microtubule organizing center. Its subcellular location is the centrosome. In terms of biological role, substrate-recognition component of the SCF (SKP1-CUL1-F-box protein)-type E3 ubiquitin ligase complex. Component of the nexin-dynein regulatory complex (N-DRC), a key regulator of ciliary/flagellar motility which maintains the alignment and integrity of the distal axoneme and regulates microtubule sliding in motile axonemes. Specifically targets CEP192 isoform 3 for ubiquitin-mediated proteolysis and thereby acts as a regulator of microtubule nucleation activity. This chain is F-box and leucine-rich repeat protein 13 (Fbxl13), found in Mus musculus (Mouse).